A 454-amino-acid chain; its full sequence is Transcription factor bHLH123 (454 aa).

The span at 101-113 shows a compositional bias: low complexity; the sequence is SNANANTTSSTSS. Disordered regions lie at residues 101–127, 185–228, 270–348, and 398–417; these read SNAN…HHQA, ATTT…QFGS, AAAG…KRKE, and GASL…VSEE. Composition is skewed to polar residues over residues 185–195 and 207–228; these read ATTTTPNSSSG and SSDQ…QFGS. Basic and acidic residues predominate over residues 303 to 324; it reads EQPKNISEIRDSSSNEVKRGGN. A bHLH domain is found at 334–383; it reads KSEAASPSPAFKRKEKMGDRIAALQQLVSPFGKTDAASVLSEAIEYIKFL.

As to quaternary structure, homodimer.

It is found in the nucleus. The sequence is that of Transcription factor bHLH123 (BHLH123) from Arabidopsis thaliana (Mouse-ear cress).